The chain runs to 367 residues: Anthranilate phosphoribosyltransferase (367 aa).

Over residues 1–21 the composition is skewed to low complexity; that stretch reads MALSSESSAASAARRPSGGPA. Positions 1 to 24 are disordered; that stretch reads MALSSESSAASAARRPSGGPATSW. Residues Gly104, 107–108, Thr112, 114–117, 132–140, and Gly144 each bind 5-phospho-alpha-D-ribose 1-diphosphate; these read GD, NLST, and KHGNRAASS. Gly104 contributes to the anthranilate binding site. Ser116 is a binding site for Mg(2+). Asn135 is a binding site for anthranilate. Residue Arg190 participates in anthranilate binding. Positions 248 and 249 each coordinate Mg(2+).

The protein belongs to the anthranilate phosphoribosyltransferase family. Homodimer. Mg(2+) serves as cofactor.

It catalyses the reaction N-(5-phospho-beta-D-ribosyl)anthranilate + diphosphate = 5-phospho-alpha-D-ribose 1-diphosphate + anthranilate. Its pathway is amino-acid biosynthesis; L-tryptophan biosynthesis; L-tryptophan from chorismate: step 2/5. Functionally, catalyzes the transfer of the phosphoribosyl group of 5-phosphorylribose-1-pyrophosphate (PRPP) to anthranilate to yield N-(5'-phosphoribosyl)-anthranilate (PRA). This chain is Anthranilate phosphoribosyltransferase, found in Mycolicibacterium paratuberculosis (strain ATCC BAA-968 / K-10) (Mycobacterium paratuberculosis).